Here is a 505-residue protein sequence, read N- to C-terminus: ATP synthase subunit alpha (505 aa).

170 to 177 (GDRQTGKT) is a binding site for ATP.

The protein belongs to the ATPase alpha/beta chains family. As to quaternary structure, F-type ATPases have 2 components, CF(1) - the catalytic core - and CF(0) - the membrane proton channel. CF(1) has five subunits: alpha(3), beta(3), gamma(1), delta(1), epsilon(1). CF(0) has four main subunits: a(1), b(1), b'(1) and c(9-12).

It is found in the cellular thylakoid membrane. It carries out the reaction ATP + H2O + 4 H(+)(in) = ADP + phosphate + 5 H(+)(out). Produces ATP from ADP in the presence of a proton gradient across the membrane. The alpha chain is a regulatory subunit. This Synechococcus elongatus (strain ATCC 33912 / PCC 7942 / FACHB-805) (Anacystis nidulans R2) protein is ATP synthase subunit alpha.